A 384-amino-acid polypeptide reads, in one-letter code: tRNA(Met) cytidine acetate ligase (384 aa).

ATP is bound by residues 7–20 (VAEY…HEFL), glycine 101, asparagine 153, and arginine 178.

It belongs to the TmcAL family.

It localises to the cytoplasm. The enzyme catalyses cytidine(34) in elongator tRNA(Met) + acetate + ATP = N(4)-acetylcytidine(34) in elongator tRNA(Met) + AMP + diphosphate. Its function is as follows. Catalyzes the formation of N(4)-acetylcytidine (ac(4)C) at the wobble position of elongator tRNA(Met), using acetate and ATP as substrates. First activates an acetate ion to form acetyladenylate (Ac-AMP) and then transfers the acetyl group to tRNA to form ac(4)C34. In Lactobacillus delbrueckii subsp. bulgaricus (strain ATCC 11842 / DSM 20081 / BCRC 10696 / JCM 1002 / NBRC 13953 / NCIMB 11778 / NCTC 12712 / WDCM 00102 / Lb 14), this protein is tRNA(Met) cytidine acetate ligase.